We begin with the raw amino-acid sequence, 90 residues long: Phosphocarrier protein NPr (90 aa).

The HPr domain maps to 2–90 (TVKQTVEISN…ALFNAGFDED (89 aa)). Catalysis depends on His16, which acts as the Pros-phosphohistidine intermediate.

The protein belongs to the HPr family.

The protein localises to the cytoplasm. Functionally, component of the phosphoenolpyruvate-dependent nitrogen-metabolic phosphotransferase system (nitrogen-metabolic PTS), that seems to be involved in regulating nitrogen metabolism. The phosphoryl group from phosphoenolpyruvate (PEP) is transferred to the phosphoryl carrier protein NPr by enzyme I-Ntr. Phospho-NPr then transfers it to EIIA-Ntr. Could function in the transcriptional regulation of sigma-54 dependent operons in conjunction with the NPr (PtsO) and EIIA-Ntr (PtsN) proteins. This chain is Phosphocarrier protein NPr (ptsO), found in Klebsiella oxytoca.